A 487-amino-acid polypeptide reads, in one-letter code: N-succinylglutamate 5-semialdehyde dehydrogenase (487 aa).

The segment at 1–23 is disordered; the sequence is MTHFIKGQWHTGKGHDVASSNPA. 220–225 is an NAD(+) binding site; that stretch reads GSSRTG. Residues Glu243 and Cys277 contribute to the active site.

The protein belongs to the aldehyde dehydrogenase family. AstD subfamily.

It catalyses the reaction N-succinyl-L-glutamate 5-semialdehyde + NAD(+) + H2O = N-succinyl-L-glutamate + NADH + 2 H(+). It participates in amino-acid degradation; L-arginine degradation via AST pathway; L-glutamate and succinate from L-arginine: step 4/5. Catalyzes the NAD-dependent reduction of succinylglutamate semialdehyde into succinylglutamate. This is N-succinylglutamate 5-semialdehyde dehydrogenase from Shewanella oneidensis (strain ATCC 700550 / JCM 31522 / CIP 106686 / LMG 19005 / NCIMB 14063 / MR-1).